Here is a 195-residue protein sequence, read N- to C-terminus: Exosome complex component CSL4 (195 aa).

Phosphoserine occurs at positions 21 and 98. Residues 66 to 147 (DVGAIVTCKV…AQSNYLLTTA (82 aa)) enclose the S1 motif domain.

It belongs to the CSL4 family. In terms of assembly, component of the RNA exosome core complex (Exo-9), composed of EXOSC1, EXOSC2, EXOSC3, EXOSC4, EXOSC5, EXOSC6, EXOSC7, EXOSC8 and EXOSC9; within the complex interacts with EXOSC6. The catalytically inactive RNA exosome core complex (Exo-9) associates with the catalytic subunit EXOSC10/RRP6. Exo-9 may associate with DIS3 to form the nucleolar exosome complex, or DIS3L to form the cytoplasmic exosome complex. Exo-9 is formed by a hexameric base ring consisting of the heterodimers EXOSC4-EXOSC9, EXOSC5-EXOSC8 and EXOSC6-EXOSC7, and a cap ring consisting of EXOSC1, EXOSC2 and EXOSC3. The RNA exosome complex associates with cofactors C1D/RRP47, MPHOSPH6/MPP6 and MTREX/MTR4. Interacts with DDX60.

The protein localises to the nucleus. The protein resides in the nucleolus. It is found in the cytoplasm. Functionally, non-catalytic component of the RNA exosome complex which has 3'-&gt;5' exoribonuclease activity and participates in a multitude of cellular RNA processing and degradation events. In the nucleus, the RNA exosome complex is involved in proper maturation of stable RNA species such as rRNA, snRNA and snoRNA, in the elimination of RNA processing by-products and non-coding 'pervasive' transcripts, such as antisense RNA species and promoter-upstream transcripts (PROMPTs), and of mRNAs with processing defects, thereby limiting or excluding their export to the cytoplasm. The RNA exosome may be involved in Ig class switch recombination (CSR) and/or Ig variable region somatic hypermutation (SHM) by targeting AICDA deamination activity to transcribed dsDNA substrates. In the cytoplasm, the RNA exosome complex is involved in general mRNA turnover and specifically degrades inherently unstable mRNAs containing AU-rich elements (AREs) within their 3' untranslated regions, and in RNA surveillance pathways, preventing translation of aberrant mRNAs. It seems to be involved in degradation of histone mRNA. The catalytic inactive RNA exosome core complex of 9 subunits (Exo-9) is proposed to play a pivotal role in the binding and presentation of RNA for ribonucleolysis, and to serve as a scaffold for the association with catalytic subunits and accessory proteins or complexes. EXOSC1 as peripheral part of the Exo-9 complex stabilizes the hexameric ring of RNase PH-domain subunits through contacts with EXOSC6 and EXOSC8. This Homo sapiens (Human) protein is Exosome complex component CSL4 (EXOSC1).